Consider the following 573-residue polypeptide: Vacuolar protein 8 (573 aa).

The tract at residues 1-36 (MAASAADRMGRQRMSGLSCSAPPRPTVVTNPGNKQD) is disordered. The segment covering 27–36 (VVTNPGNKQD) has biased composition (polar residues). ARM repeat units follow at residues 60-97 (NRGEVDFFSNGPLRALSTLVYSDNIDLQRSAALAFAEI), 98-137 (TEKDIRPVNRDCLEPVLLLLQNTDPDIQRAASAALGNLAV), 139-178 (NENKVLIVEMGGFEPLIRQMMSPNVEVQCNAVGCITNLAT), 180-219 (EANKSKIARSGALLPLTKLAKSKDMRVQRNATGALLNMTH), 221-260 (DQNRQELVNAGAIPILVSLLSSRDPDVQYYSTTALSNIAV), 264-303 (NRKKLSSSEPRLVEHLIKLMDSGSPRVQCQAALALRNLAS), 305-344 (SDYQLEIVKANGLPHLFNLFQSTHTPLVLAAVACIRNISI), 346-386 (PLNE…NLAA), and 430-469 (DELKGTLLELGIAEVLIPLTLSDNIEVQGNSAAALGNLSS).

Belongs to the beta-catenin family.

It localises to the vacuole membrane. Functionally, functions in both vacuole inheritance and protein targeting from the cytoplasm to vacuole. The sequence is that of Vacuolar protein 8 (VAC8) from Yarrowia lipolytica (strain CLIB 122 / E 150) (Yeast).